A 423-amino-acid polypeptide reads, in one-letter code: 26S proteasome regulatory subunit 6A homolog B (423 aa).

A Phosphoserine modification is found at serine 18. ATP is bound at residue 211–218; the sequence is GPPGTGKT. Residues lysine 234, lysine 278, and lysine 415 each participate in a glycyl lysine isopeptide (Lys-Gly) (interchain with G-Cter in ubiquitin) cross-link.

The protein belongs to the AAA ATPase family. As to quaternary structure, component of the 19S regulatory particle (RP/PA700) base subcomplex of the 26S proteasome. The 26S proteasome is composed of a core protease (CP), known as the 20S proteasome, capped at one or both ends by the 19S regulatory particle (RP/PA700). The RP/PA700 complex is composed of at least 17 different subunits in two subcomplexes, the base and the lid, which form the portions proximal and distal to the 20S proteolytic core, respectively.

The protein localises to the cytoplasm. Its subcellular location is the nucleus. Functionally, the 26S proteasome is involved in the ATP-dependent degradation of ubiquitinated proteins. The regulatory (or ATPase) complex confers ATP dependency and substrate specificity to the 26S complex. This chain is 26S proteasome regulatory subunit 6A homolog B (RPT5B), found in Arabidopsis thaliana (Mouse-ear cress).